A 466-amino-acid chain; its full sequence is Asparagine--tRNA ligase (466 aa).

This sequence belongs to the class-II aminoacyl-tRNA synthetase family. In terms of assembly, homodimer.

The protein localises to the cytoplasm. The enzyme catalyses tRNA(Asn) + L-asparagine + ATP = L-asparaginyl-tRNA(Asn) + AMP + diphosphate + H(+). This chain is Asparagine--tRNA ligase, found in Shewanella baltica (strain OS155 / ATCC BAA-1091).